Consider the following 321-residue polypeptide: MTPASRPDWCLILLFLAVLRGESRYIQMREAAEDALFLLNSDFKRELSEGQIYRRSLRCIDMLSIEGQFTFQADRPQLHCALFLIGEPEEFIIIEYNFVNIDCIGGDILKVFDGWIIKGEKFPSSLDHPLSTMERYTDICEDGDVGSITRSSQNVAMIFFRVQQPGHGFTLTIRKIPNLFPCNVISQSMNGRFTMITPHQHRNCSFSIIYPVVIKIFDLTLGHFNELQLKKPPPKGCGDAGDFVELLGGAGLDPSKMFPLADLCHSFHGSAQMKIGCDNTVVRMVSSGNFINRVTFEYNQLDRQLEKKQGNSVEEACFPSD.

An N-terminal signal peptide occupies residues 1–21; sequence MTPASRPDWCLILLFLAVLRG. 5 cysteine pairs are disulfide-bonded: Cys-59-Cys-80, Cys-103-Cys-140, Cys-182-Cys-204, Cys-237-Cys-264, and Cys-277-Cys-317. Residue Asn-203 is glycosylated (N-linked (GlcNAc...) asparagine).

This sequence belongs to the CRF-binding protein family.

Its subcellular location is the secreted. Functionally, binds CRF and inactivates it. May prevent inappropriate pituitary-adrenal stimulation in pregnancy. This chain is Corticotropin-releasing factor-binding protein (crhbp), found in Xenopus laevis (African clawed frog).